Here is a 280-residue protein sequence, read N- to C-terminus: 2-dehydro-3-deoxyphosphooctonate aldolase (280 aa).

It belongs to the KdsA family.

The protein localises to the cytoplasm. It carries out the reaction D-arabinose 5-phosphate + phosphoenolpyruvate + H2O = 3-deoxy-alpha-D-manno-2-octulosonate-8-phosphate + phosphate. The protein operates within carbohydrate biosynthesis; 3-deoxy-D-manno-octulosonate biosynthesis; 3-deoxy-D-manno-octulosonate from D-ribulose 5-phosphate: step 2/3. Its pathway is bacterial outer membrane biogenesis; lipopolysaccharide biosynthesis. The chain is 2-dehydro-3-deoxyphosphooctonate aldolase from Colwellia psychrerythraea (strain 34H / ATCC BAA-681) (Vibrio psychroerythus).